Reading from the N-terminus, the 69-residue chain is Regulatory protein MokC (69 aa).

A helical membrane pass occupies residues 24-44; sequence KAMIVALIVICITAVVAALVT.

Belongs to the Hok/Gef family.

The protein resides in the cell inner membrane. In terms of biological role, might be the toxic component of a type I toxin-antitoxin (TA) system. Regulatory peptide which completely overlaps hokC and enables hokC expression. The chain is Regulatory protein MokC (mokC) from Escherichia coli (strain K12).